Reading from the N-terminus, the 133-residue chain is Agouti-signaling protein (133 aa).

The N-terminal stretch at 1–22 (MDVIHLFLATLLVSLCFLTAYS) is a signal peptide. A compositionally biased stretch (basic and acidic residues) spans 26–36 (PEEKPKDDRSL). Residues 26 to 83 (PEEKPKDDRSLRNNSSMNLLDSPSVSIMALNKKSKKISRKEAEKKKRSSKKKASMTKV) are disordered. A compositionally biased stretch (polar residues) spans 37–50 (RNNSSMNLLDSPSV). N-linked (GlcNAc...) asparagine glycosylation is found at Asn38 and Asn39. Residues 70–79 (KKRSSKKKAS) are compositionally biased toward basic residues. 5 disulfide bridges follow: Cys94–Cys109, Cys101–Cys115, Cys108–Cys126, Cys112–Cys133, and Cys117–Cys124. Residues 94–133 (CVATRDSCKPPAPACCDPCASCQCRFFRSACSCRVLTRTC) form the Agouti domain.

The protein localises to the secreted. In terms of biological role, involved in the regulation of melanogenesis. The binding of ASP to MC1R precludes alpha-MSH initiated signaling and thus blocks production of cAMP, leading to a down-regulation of eumelanogenesis (brown/black pigment) and thus increasing synthesis of pheomelanin (yellow/red pigment). The protein is Agouti-signaling protein (ASIP) of Equus caballus (Horse).